Consider the following 514-residue polypeptide: Peptide chain release factor 3 (514 aa).

In terms of domain architecture, tr-type G spans 8 to 268; sequence KKRRTFAIIS…TFLEFAPEPH (261 aa). Residues 17–24, 85–89, and 139–142 each bind GTP; these read SHPDAGKT, DTPGH, and NKLD.

This sequence belongs to the TRAFAC class translation factor GTPase superfamily. Classic translation factor GTPase family. PrfC subfamily.

The protein resides in the cytoplasm. Functionally, increases the formation of ribosomal termination complexes and stimulates activities of RF-1 and RF-2. It binds guanine nucleotides and has strong preference for UGA stop codons. It may interact directly with the ribosome. The stimulation of RF-1 and RF-2 is significantly reduced by GTP and GDP, but not by GMP. This chain is Peptide chain release factor 3, found in Streptococcus pyogenes serotype M2 (strain MGAS10270).